We begin with the raw amino-acid sequence, 245 residues long: 1-(5-phosphoribosyl)-5-[(5-phosphoribosylamino)methylideneamino] imidazole-4-carboxamide isomerase (245 aa).

D10 serves as the catalytic Proton acceptor. D135 acts as the Proton donor in catalysis.

This sequence belongs to the HisA/HisF family.

Its subcellular location is the cytoplasm. The enzyme catalyses 1-(5-phospho-beta-D-ribosyl)-5-[(5-phospho-beta-D-ribosylamino)methylideneamino]imidazole-4-carboxamide = 5-[(5-phospho-1-deoxy-D-ribulos-1-ylimino)methylamino]-1-(5-phospho-beta-D-ribosyl)imidazole-4-carboxamide. It functions in the pathway amino-acid biosynthesis; L-histidine biosynthesis; L-histidine from 5-phospho-alpha-D-ribose 1-diphosphate: step 4/9. This Methanosarcina acetivorans (strain ATCC 35395 / DSM 2834 / JCM 12185 / C2A) protein is 1-(5-phosphoribosyl)-5-[(5-phosphoribosylamino)methylideneamino] imidazole-4-carboxamide isomerase.